We begin with the raw amino-acid sequence, 578 residues long: Proline--tRNA ligase (578 aa).

The protein belongs to the class-II aminoacyl-tRNA synthetase family. ProS type 1 subfamily. Homodimer.

Its subcellular location is the cytoplasm. It carries out the reaction tRNA(Pro) + L-proline + ATP = L-prolyl-tRNA(Pro) + AMP + diphosphate. Its function is as follows. Catalyzes the attachment of proline to tRNA(Pro) in a two-step reaction: proline is first activated by ATP to form Pro-AMP and then transferred to the acceptor end of tRNA(Pro). As ProRS can inadvertently accommodate and process non-cognate amino acids such as alanine and cysteine, to avoid such errors it has two additional distinct editing activities against alanine. One activity is designated as 'pretransfer' editing and involves the tRNA(Pro)-independent hydrolysis of activated Ala-AMP. The other activity is designated 'posttransfer' editing and involves deacylation of mischarged Ala-tRNA(Pro). The misacylated Cys-tRNA(Pro) is not edited by ProRS. This chain is Proline--tRNA ligase, found in Burkholderia vietnamiensis (strain G4 / LMG 22486) (Burkholderia cepacia (strain R1808)).